A 280-amino-acid polypeptide reads, in one-letter code: Formyltetrahydrofolate deformylase (280 aa).

An ACT domain is found at 8 to 86; sequence VLRTICPDQK…RELNPAGRRR (79 aa). Asp225 is an active-site residue.

The protein belongs to the PurU family.

It carries out the reaction (6R)-10-formyltetrahydrofolate + H2O = (6S)-5,6,7,8-tetrahydrofolate + formate + H(+). The protein operates within purine metabolism; IMP biosynthesis via de novo pathway; formate from 10-formyl-5,6,7,8-tetrahydrofolate: step 1/1. In terms of biological role, catalyzes the hydrolysis of 10-formyltetrahydrofolate (formyl-FH4) to formate and tetrahydrofolate (FH4). The sequence is that of Formyltetrahydrofolate deformylase from Escherichia coli O6:H1 (strain CFT073 / ATCC 700928 / UPEC).